The sequence spans 120 residues: Ribonuclease P protein component (120 aa).

This sequence belongs to the RnpA family. As to quaternary structure, consists of a catalytic RNA component (M1 or rnpB) and a protein subunit.

It carries out the reaction Endonucleolytic cleavage of RNA, removing 5'-extranucleotides from tRNA precursor.. Its function is as follows. RNaseP catalyzes the removal of the 5'-leader sequence from pre-tRNA to produce the mature 5'-terminus. It can also cleave other RNA substrates such as 4.5S RNA. The protein component plays an auxiliary but essential role in vivo by binding to the 5'-leader sequence and broadening the substrate specificity of the ribozyme. This chain is Ribonuclease P protein component, found in Rickettsia bellii (strain RML369-C).